Consider the following 486-residue polypeptide: Cytosol aminopeptidase (486 aa).

Zn(2+) is bound by residues Lys-249 and Asp-254. The active site involves Lys-261. Zn(2+) is bound by residues Asp-272, Asp-331, and Glu-333. Arg-335 is an active-site residue.

It belongs to the peptidase M17 family. As to quaternary structure, homohexamer. Requires Zn(2+) as cofactor.

The protein resides in the cytoplasm. It catalyses the reaction Release of an N-terminal amino acid, Xaa-|-Yaa-, in which Xaa is preferably Leu, but may be other amino acids including Pro although not Arg or Lys, and Yaa may be Pro. Amino acid amides and methyl esters are also readily hydrolyzed, but rates on arylamides are exceedingly low.. The enzyme catalyses Release of N-terminal proline from a peptide.. Presumably involved in the processing and regular turnover of intracellular proteins. Catalyzes the removal of unsubstituted N-terminal amino acids from various peptides. The polypeptide is Cytosol aminopeptidase (Encephalitozoon cuniculi (strain GB-M1) (Microsporidian parasite)).